A 361-amino-acid chain; its full sequence is tRNA/tmRNA (uracil-C(5))-methyltransferase (361 aa).

Residues Q185, Y213, N218, E234, and D294 each coordinate S-adenosyl-L-methionine. C319 (nucleophile) is an active-site residue. E353 acts as the Proton acceptor in catalysis.

This sequence belongs to the class I-like SAM-binding methyltransferase superfamily. RNA M5U methyltransferase family. TrmA subfamily.

The enzyme catalyses uridine(54) in tRNA + S-adenosyl-L-methionine = 5-methyluridine(54) in tRNA + S-adenosyl-L-homocysteine + H(+). It carries out the reaction uridine(341) in tmRNA + S-adenosyl-L-methionine = 5-methyluridine(341) in tmRNA + S-adenosyl-L-homocysteine + H(+). Functionally, dual-specificity methyltransferase that catalyzes the formation of 5-methyluridine at position 54 (m5U54) in all tRNAs, and that of position 341 (m5U341) in tmRNA (transfer-mRNA). This Pseudomonas putida (strain W619) protein is tRNA/tmRNA (uracil-C(5))-methyltransferase.